The primary structure comprises 500 residues: Probable cytosol aminopeptidase (500 aa).

Mn(2+)-binding residues include lysine 261 and aspartate 266. Lysine 273 is a catalytic residue. Aspartate 284, aspartate 343, and glutamate 345 together coordinate Mn(2+). Residue arginine 347 is part of the active site.

The protein belongs to the peptidase M17 family. The cofactor is Mn(2+).

Its subcellular location is the cytoplasm. It catalyses the reaction Release of an N-terminal amino acid, Xaa-|-Yaa-, in which Xaa is preferably Leu, but may be other amino acids including Pro although not Arg or Lys, and Yaa may be Pro. Amino acid amides and methyl esters are also readily hydrolyzed, but rates on arylamides are exceedingly low.. It carries out the reaction Release of an N-terminal amino acid, preferentially leucine, but not glutamic or aspartic acids.. In terms of biological role, presumably involved in the processing and regular turnover of intracellular proteins. Catalyzes the removal of unsubstituted N-terminal amino acids from various peptides. In Wolbachia pipientis wMel, this protein is Probable cytosol aminopeptidase.